Here is a 657-residue protein sequence, read N- to C-terminus: Glycogen debranching enzyme (657 aa).

Residue Asp-336 is the Nucleophile of the active site. The Proton donor role is filled by Glu-371. The segment covering 458–467 has biased composition (basic and acidic residues); that stretch reads NEANGEENRD. Residues 458 to 479 are disordered; that stretch reads NEANGEENRDGTNNNYSNNHGK.

It belongs to the glycosyl hydrolase 13 family.

It catalyses the reaction Hydrolysis of (1-&gt;6)-alpha-D-glucosidic linkages to branches with degrees of polymerization of three or four glucose residues in limit dextrin.. It participates in glycan degradation; glycogen degradation. In terms of biological role, removes maltotriose and maltotetraose chains that are attached by 1,6-alpha-linkage to the limit dextrin main chain, generating a debranched limit dextrin. The chain is Glycogen debranching enzyme from Escherichia coli O8 (strain IAI1).